A 64-amino-acid polypeptide reads, in one-letter code: Large ribosomal subunit protein bL35 (64 aa).

The disordered stretch occupies residues 1–43; it reads MPKMKSKKSLAKRVIAKKNGTLKRGKAYRSHRATGKTTKQKRH.

The protein belongs to the bacterial ribosomal protein bL35 family.

The polypeptide is Large ribosomal subunit protein bL35 (Mesoplasma florum (strain ATCC 33453 / NBRC 100688 / NCTC 11704 / L1) (Acholeplasma florum)).